We begin with the raw amino-acid sequence, 331 residues long: Phospho-N-acetylmuramoyl-pentapeptide-transferase (331 aa).

Transmembrane regions (helical) follow at residues 7–27 (IIYTIIIGFIITLILGPLTIP), 54–74 (TIGGIILIMSIIITSLTSGLI), 78–98 (LWIALAATVAFGIIGFIDDFI), 106–126 (LGLRAYQKLILQGTIAVILAI), 133–153 (IMGTEVIVPFVGEGITIAGFT), 154–174 (ITQTIDLGILYIPFIVFVVVA), 195–215 (IIAAFFALVAMSWGYVSLAIF), 249–269 (AIATIAVLMNVVLIIPIVGGI), and 311–331 (VVIVFWVVTVILCLVGMLALS).

It belongs to the glycosyltransferase 4 family. MraY subfamily. The cofactor is Mg(2+).

It localises to the cell membrane. It carries out the reaction UDP-N-acetyl-alpha-D-muramoyl-L-alanyl-gamma-D-glutamyl-meso-2,6-diaminopimeloyl-D-alanyl-D-alanine + di-trans,octa-cis-undecaprenyl phosphate = di-trans,octa-cis-undecaprenyl diphospho-N-acetyl-alpha-D-muramoyl-L-alanyl-D-glutamyl-meso-2,6-diaminopimeloyl-D-alanyl-D-alanine + UMP. Its pathway is cell wall biogenesis; peptidoglycan biosynthesis. In terms of biological role, catalyzes the initial step of the lipid cycle reactions in the biosynthesis of the cell wall peptidoglycan: transfers peptidoglycan precursor phospho-MurNAc-pentapeptide from UDP-MurNAc-pentapeptide onto the lipid carrier undecaprenyl phosphate, yielding undecaprenyl-pyrophosphoryl-MurNAc-pentapeptide, known as lipid I. This chain is Phospho-N-acetylmuramoyl-pentapeptide-transferase, found in Alkaliphilus metalliredigens (strain QYMF).